We begin with the raw amino-acid sequence, 356 residues long: MKLTINKNSAKWMQLPRDVLVGHGVLEEIGDVCRDLKMKGNALIVTGSTTNNIAGKRVSNLLESAGCSAEMVLTCKATKEEVEKVMEKALEVETNFLIGVGSGRSIDLAKLASTRLELPFISVPTAASHDGIASSRASIVDNGRSTSAQAQAPIAVIADTEIISAAPFRFLAAGCGDIISNYTAVLDWELASRLRNEYFGAYAAALSRMAARVIIECADSIKPEHETSARLVVKALVSNGVAMSIAGSSRPASGSEHMFSHALDKIAPKPALHGEQCGVGTIMMMYLHGGNWQEIREALKKIGAPVTAEELGIEDRYIIEALLHAHSIRPERYTILGSGLNPSAAEKVARITKVIN.

Residues 103–107 and 125–128 contribute to the NAD(+) site; these read GRSID and TAAS. Substrate is bound at residue Asp-130. Position 134 (Ser-134) interacts with NAD(+). Residue Asp-177 participates in substrate binding. Zn(2+) is bound by residues Asp-177 and His-257. Position 261 (His-261) interacts with substrate. Position 273 (His-273) interacts with Zn(2+).

Belongs to the glycerol-1-phosphate dehydrogenase family. Zn(2+) serves as cofactor.

It is found in the cytoplasm. The catalysed reaction is sn-glycerol 1-phosphate + NAD(+) = dihydroxyacetone phosphate + NADH + H(+). It catalyses the reaction sn-glycerol 1-phosphate + NADP(+) = dihydroxyacetone phosphate + NADPH + H(+). The protein operates within membrane lipid metabolism; glycerophospholipid metabolism. Functionally, catalyzes the NAD(P)H-dependent reduction of dihydroxyacetonephosphate (DHAP or glycerone phosphate) to glycerol 1-phosphate (G1P). The G1P thus generated is used as the glycerophosphate backbone of phospholipids in the cellular membranes of Archaea. The polypeptide is Glycerol-1-phosphate dehydrogenase [NAD(P)+] (Methanosarcina barkeri (strain Fusaro / DSM 804)).